Here is a 90-residue protein sequence, read N- to C-terminus: Large ribosomal subunit protein eL33 (90 aa).

This sequence belongs to the eukaryotic ribosomal protein eL33 family.

This chain is Large ribosomal subunit protein eL33, found in Methanopyrus kandleri (strain AV19 / DSM 6324 / JCM 9639 / NBRC 100938).